A 325-amino-acid polypeptide reads, in one-letter code: Acetyl-coenzyme A carboxylase carboxyl transferase subunit alpha (325 aa).

The region spanning 35 to 292 is the CoA carboxyltransferase C-terminal domain; that stretch reads EIEKLEARLA…DRVLRRSLKQ (258 aa).

The protein belongs to the AccA family. Acetyl-CoA carboxylase is a heterohexamer composed of biotin carboxyl carrier protein (AccB), biotin carboxylase (AccC) and two subunits each of ACCase subunit alpha (AccA) and ACCase subunit beta (AccD).

It localises to the cytoplasm. The catalysed reaction is N(6)-carboxybiotinyl-L-lysyl-[protein] + acetyl-CoA = N(6)-biotinyl-L-lysyl-[protein] + malonyl-CoA. It functions in the pathway lipid metabolism; malonyl-CoA biosynthesis; malonyl-CoA from acetyl-CoA: step 1/1. In terms of biological role, component of the acetyl coenzyme A carboxylase (ACC) complex. First, biotin carboxylase catalyzes the carboxylation of biotin on its carrier protein (BCCP) and then the CO(2) group is transferred by the carboxyltransferase to acetyl-CoA to form malonyl-CoA. The protein is Acetyl-coenzyme A carboxylase carboxyl transferase subunit alpha of Geobacillus kaustophilus (strain HTA426).